Consider the following 224-residue polypeptide: UPF0758 protein PSHAa2643 (224 aa).

The MPN domain maps to Ile-102–Ile-224. 3 residues coordinate Zn(2+): His-173, His-175, and Asp-186. The JAMM motif motif lies at His-173 to Asp-186.

This sequence belongs to the UPF0758 family.

In Pseudoalteromonas translucida (strain TAC 125), this protein is UPF0758 protein PSHAa2643.